The chain runs to 251 residues: L,D-transpeptidase 1 (251 aa).

A signal peptide spans methionine 1–alanine 28. In terms of domain architecture, L,D-TPase catalytic spans leucine 125 to valine 250. Substrate-binding positions include tyrosine 190 and serine 203–glycine 204. The active-site Proton donor/acceptor is the histidine 208. Residue cysteine 226 is the Nucleophile of the active site. Substrate is bound at residue asparagine 228.

In terms of assembly, monomer.

Its subcellular location is the periplasm. It functions in the pathway cell wall biogenesis; peptidoglycan biosynthesis. Its activity is regulated as follows. Is irreversibly inactivated by the beta-lactams carbapenems via the formation of a covalent adduct resulting from acylation of the catalytic Cys. Its function is as follows. Generates 3-&gt;3 cross-links in peptidoglycan, catalyzing the cleavage of the mDap(3)-D-Ala(4) bond of a tetrapeptide donor stem and the formation of a bond between the carbonyl of mDap(3) of the donor stem and the side chain of mDap(3) of the acceptor stem. Is specific for donor substrates containing a stem tetrapeptide since it cannot use pentapeptide stems. This is L,D-transpeptidase 1 (ldtA) from Mycobacterium tuberculosis (strain CDC 1551 / Oshkosh).